Consider the following 315-residue polypeptide: Tyrosine recombinase XerC (315 aa).

The Core-binding (CB) domain maps to 1–103; that stretch reads MITSFYAFLD…AIKSFARFCV (103 aa). The Tyr recombinase domain occupies 124 to 306; sequence ELPSPLTYEQ…SMKLKKQIHD (183 aa). Residues Arg-164, Lys-188, His-258, Arg-261, and His-284 contribute to the active site. Tyr-293 acts as the O-(3'-phospho-DNA)-tyrosine intermediate in catalysis.

The protein belongs to the 'phage' integrase family. XerC subfamily. In terms of assembly, forms a cyclic heterotetrameric complex composed of two molecules of XerC and two molecules of XerD.

It is found in the cytoplasm. In terms of biological role, site-specific tyrosine recombinase, which acts by catalyzing the cutting and rejoining of the recombining DNA molecules. The XerC-XerD complex is essential to convert dimers of the bacterial chromosome into monomers to permit their segregation at cell division. It also contributes to the segregational stability of plasmids. This chain is Tyrosine recombinase XerC, found in Chlamydia trachomatis serovar L2b (strain UCH-1/proctitis).